The following is a 253-amino-acid chain: UPF0280 protein MA_1715 (253 aa).

Belongs to the UPF0280 family.

The chain is UPF0280 protein MA_1715 from Methanosarcina acetivorans (strain ATCC 35395 / DSM 2834 / JCM 12185 / C2A).